A 1020-amino-acid chain; its full sequence is Non-canonical nonribosomal peptide synthetase hkm10 (1020 aa).

Residues 21 to 419 are adenylation (A) domain; that stretch reads QMLEDPDAIA…GRFDHQVKIR (399 aa). One can recognise a Carrier domain in the interval 526 to 608; that stretch reads QDKVPSEGAS…QLAHIVDRNQ (83 aa). Serine 568 is modified (O-(pantetheine 4'-phosphoryl)serine). Positions 652–894 are short-chain dehydrogenase/reductase (R) domain; it reads LTGATGFVGA…FVPIDYVTST (243 aa).

The protein belongs to the NRP synthetase family.

It participates in secondary metabolite biosynthesis. Non-canonical nonribosomal peptide synthetase; part of the gene cluster that mediates the biosynthesis of hancockiamides, an unusual new family of N-cinnamoylated piperazines. The NRPS hkm10 and the NmrA-like reductase hkm9 are proposed to convert two molecules of L-Phe to the intermediary piperazine called xenocockiamide A. Xenocockiamide A is then converted to hancockiamide D via a series of hydroxylations and O-methylations. The tyrosinase hkm6 may catalyze an aromatic hydroxylation, then the 2-oxoglutarate-dependent Fe(II) dioxygenase hkm4 and the FAD-dependent phenol hydroxylase hkm7 may catalyze consecutive hydroxylations to install 2 more hydroxy groups, and the methyltransferase hkm8 probably catalyzes two methylations using 2 molecules of S-adenosyl-L-methionine (SAM). The NRPS hkm11 activates and transfers trans-cinnamate supplied by the PAL hkm12 to hancockiamide D and produces hancockiamide A. NRPS Hkm11 has the flexibility to tolerate the bulky hancockiamide G as a substrate and the absence of the acetyl-transferase hkm3 opens up the opportunity for hkm11 to introduce a second N-cinnamoyl moiety. The cytochrome P450 monooxygenase hkm5 catalyzes the methylenedioxy bridge formation, converting hancockiamide A into hancockiamide G. Hkm5 can also convert hancockiamide B into hancockiamide C, and hancockiamide D into hancockiamide H. The N-acetyltransferase hkm3 finally transfers an acetyl group to 1-N of piperazine, converting hancockiamide A into hancockiamide B and hancockiamide G into hancockiamide C. The chain is Non-canonical nonribosomal peptide synthetase hkm10 from Aspergillus hancockii.